Reading from the N-terminus, the 424-residue chain is O-methyltransferase aunD (424 aa).

Aspartate 275 is an S-adenosyl-L-methionine binding site. Histidine 326 acts as the Proton acceptor in catalysis.

The protein belongs to the class I-like SAM-binding methyltransferase superfamily. Cation-independent O-methyltransferase family.

The protein operates within secondary metabolite biosynthesis. In terms of biological role, O-methyltransferase; part of the gene cluster that mediates the biosynthesis of aurasperone B, a dimeric gamma-naphthopyrone. The first step in the biosynthesis of aurasperone B is the production of gamma-naphthopyrone precursor YWA1 by the non-reducing polyketide synthase albA, via condensation of one acetyl-CoA starter unit with 6 malonyl-CoA units. YWA1 is then methylated by aunE at position C-6 to yield foncesin which is further methylated at position C-8 by aunD to produce fonsecin B. A key enzyme in the biosynthetic pathway is the cytochrome P450 monooxygenase aunB which catalyzes the oxidative dimerization of fonsecin B to aurasperone B. AunB also catalyzes the oxidative dimerization of rubrofusarin B into aurasperone A. This chain is O-methyltransferase aunD, found in Aspergillus niger (strain ATCC MYA-4892 / CBS 513.88 / FGSC A1513).